The following is a 68-amino-acid chain: Large ribosomal subunit protein bL31 (68 aa).

The protein belongs to the bacterial ribosomal protein bL31 family. Type A subfamily. As to quaternary structure, part of the 50S ribosomal subunit.

Binds the 23S rRNA. The chain is Large ribosomal subunit protein bL31 from Helicobacter hepaticus (strain ATCC 51449 / 3B1).